We begin with the raw amino-acid sequence, 404 residues long: S-adenosylmethionine synthase (404 aa).

Residue H17 participates in ATP binding. A Mg(2+)-binding site is contributed by D19. Position 45 (E45) interacts with K(+). The L-methionine site is built by E58 and Q101. The flexible loop stretch occupies residues 101–111; it reads QSPDINRGVDR. ATP contacts are provided by residues 172 to 174, 246 to 247, D255, 261 to 262, A278, and K282; these read DAK, RF, and RK. D255 provides a ligand contact to L-methionine. Position 286 (K286) interacts with L-methionine.

This sequence belongs to the AdoMet synthase family. In terms of assembly, homotetramer; dimer of dimers. Mg(2+) serves as cofactor. K(+) is required as a cofactor.

It is found in the cytoplasm. The catalysed reaction is L-methionine + ATP + H2O = S-adenosyl-L-methionine + phosphate + diphosphate. Its pathway is amino-acid biosynthesis; S-adenosyl-L-methionine biosynthesis; S-adenosyl-L-methionine from L-methionine: step 1/1. Its function is as follows. Catalyzes the formation of S-adenosylmethionine (AdoMet) from methionine and ATP. The overall synthetic reaction is composed of two sequential steps, AdoMet formation and the subsequent tripolyphosphate hydrolysis which occurs prior to release of AdoMet from the enzyme. This Chlorobaculum tepidum (strain ATCC 49652 / DSM 12025 / NBRC 103806 / TLS) (Chlorobium tepidum) protein is S-adenosylmethionine synthase.